Reading from the N-terminus, the 77-residue chain is Dermatoxin-B1 (77 aa).

The N-terminal stretch at 1–22 is a signal peptide; that stretch reads MAFLKKSLFLVLFLGLVPLSLC. Residues 23 to 42 constitute a propeptide that is removed on maturation; the sequence is ESEKREGENEEEQEDDQSEE. The interval 24–45 is disordered; that stretch reads SEKREGENEEEQEDDQSEEKRS. Residues 30–40 show a composition bias toward acidic residues; that stretch reads ENEEEQEDDQS. Glutamine 76 carries the post-translational modification Glutamine amide.

Belongs to the frog skin active peptide (FSAP) family. Dermatoxin subfamily. In terms of tissue distribution, highest expression in skin and to a lesser extent in brain and intestine.

It is found in the secreted. The protein resides in the target cell membrane. Its function is as follows. Possesses a potent antimicrobial activity against Gram-positive bacteria B.megaterium, C.glutamicum and S.aureus and mollicutes A.laidlawii and S.melliferum. Less active against Gram-negative bacteria B.cepacia, P.aeruginosa, S.typhimurium and S.meliloti. Probably acts by disturbing membrane functions with its amphipathic structure. The protein is Dermatoxin-B1 of Phyllomedusa bicolor (Two-colored leaf frog).